Reading from the N-terminus, the 178-residue chain is Large ribosomal subunit protein uL6 (178 aa).

The protein belongs to the universal ribosomal protein uL6 family. As to quaternary structure, part of the 50S ribosomal subunit.

In terms of biological role, this protein binds to the 23S rRNA, and is important in its secondary structure. It is located near the subunit interface in the base of the L7/L12 stalk, and near the tRNA binding site of the peptidyltransferase center. This chain is Large ribosomal subunit protein uL6, found in Staphylococcus epidermidis (strain ATCC 35984 / DSM 28319 / BCRC 17069 / CCUG 31568 / BM 3577 / RP62A).